We begin with the raw amino-acid sequence, 115 residues long: Probable K(+)/H(+) antiporter subunit C (115 aa).

3 helical membrane-spanning segments follow: residues I4 to L21, V28 to G47, and A75 to A97.

This sequence belongs to the CPA3 antiporters (TC 2.A.63) subunit C family. In terms of assembly, may form a hetero-oligomeric complex that consists of six subunits: PhaAB, PhaC, PhaD, PhaE, PhaF and PhaG.

Its subcellular location is the cell membrane. Part of a K(+) efflux system which is required for the adaptation of R.meliloti to alkaline pH as well as for the infection process during symbiotic nodule development. The chain is Probable K(+)/H(+) antiporter subunit C (phaC) from Rhizobium meliloti (strain 1021) (Ensifer meliloti).